We begin with the raw amino-acid sequence, 398 residues long: Minor capsid protein (398 aa).

The tract at residues Glu359–Gln398 is disordered. Over residues Ser362 to Pro372 the composition is skewed to polar residues. A compositionally biased stretch (low complexity) spans Ala373 to Ala382.

It belongs to the T7virus minor capsid protein family. Interacts with the connector protein and the major capsid protein.

It is found in the virion. In terms of biological role, assembles with the major capsid protein to form an icosahedral capsid with a T=7 symmetry, about 60 nm in diameter, and consisting of 415 capsid proteins. The major and minor capsid proteins are incorporated into the capsid in about a 90/10 ratio respectively. Once the capsid formed, encapsidates one single copy of the viral genome. The chain is Minor capsid protein from Escherichia coli (Bacteriophage T7).